The chain runs to 505 residues: Glycerol kinase (505 aa).

Thr-17 provides a ligand contact to ADP. The ATP site is built by Thr-17, Thr-18, and Ser-19. Thr-17 is a sn-glycerol 3-phosphate binding site. Arg-21 is an ADP binding site. Residues Arg-87, Glu-88, Tyr-139, and Asp-250 each contribute to the sn-glycerol 3-phosphate site. Glycerol-binding residues include Arg-87, Glu-88, Tyr-139, Asp-250, and Gln-251. Residues Thr-272 and Gly-315 each contribute to the ADP site. The ATP site is built by Thr-272, Gly-315, Gln-319, and Gly-416. 2 residues coordinate ADP: Gly-416 and Asn-420.

Belongs to the FGGY kinase family.

The enzyme catalyses glycerol + ATP = sn-glycerol 3-phosphate + ADP + H(+). It participates in polyol metabolism; glycerol degradation via glycerol kinase pathway; sn-glycerol 3-phosphate from glycerol: step 1/1. Its activity is regulated as follows. Inhibited by fructose 1,6-bisphosphate (FBP). In terms of biological role, key enzyme in the regulation of glycerol uptake and metabolism. Catalyzes the phosphorylation of glycerol to yield sn-glycerol 3-phosphate. The polypeptide is Glycerol kinase (Azotobacter vinelandii (strain DJ / ATCC BAA-1303)).